The chain runs to 86 residues: Large ribosomal subunit protein bL31B (86 aa).

Belongs to the bacterial ribosomal protein bL31 family. Type B subfamily. Part of the 50S ribosomal subunit.

In Burkholderia lata (strain ATCC 17760 / DSM 23089 / LMG 22485 / NCIMB 9086 / R18194 / 383), this protein is Large ribosomal subunit protein bL31B.